The sequence spans 497 residues: Cytochrome P450 2D6 (497 aa).

Residue Asp301 coordinates substrate. Cys443 contributes to the heme binding site.

It belongs to the cytochrome P450 family. Requires heme as cofactor.

Its subcellular location is the endoplasmic reticulum membrane. It localises to the microsome membrane. The enzyme catalyses (5Z,8Z,11Z,14Z)-eicosatetraenoate + reduced [NADPH--hemoprotein reductase] + O2 = (8R,9S)-epoxy-(5Z,11Z,14Z)-eicosatrienoate + oxidized [NADPH--hemoprotein reductase] + H2O + H(+). It catalyses the reaction (5Z,8Z,11Z,14Z)-eicosatetraenoate + reduced [NADPH--hemoprotein reductase] + O2 = (11R,12S)-epoxy-(5Z,8Z,14Z)-eicosatrienoate + oxidized [NADPH--hemoprotein reductase] + H2O + H(+). It carries out the reaction (5Z,8Z,11Z,14Z)-eicosatetraenoate + reduced [NADPH--hemoprotein reductase] + O2 = (14S,15R)-epoxy-(5Z,8Z,11Z)-eicosatrienoate + oxidized [NADPH--hemoprotein reductase] + H2O + H(+). The catalysed reaction is N-(5Z,8Z,11Z,14Z-eicosatetraenoyl)-ethanolamine + reduced [NADPH--hemoprotein reductase] + O2 = N-(8,9-epoxy-5Z,11Z,14Z-eicosatrienoyl)-ethanolamine + oxidized [NADPH--hemoprotein reductase] + H2O + H(+). The enzyme catalyses N-(5Z,8Z,11Z,14Z-eicosatetraenoyl)-ethanolamine + reduced [NADPH--hemoprotein reductase] + O2 = N-(11,12-epoxy-5Z,8Z,14Z-eicosatrienoyl)-ethanolamine + oxidized [NADPH--hemoprotein reductase] + H2O + H(+). It catalyses the reaction N-(5Z,8Z,11Z,14Z-eicosatetraenoyl)-ethanolamine + reduced [NADPH--hemoprotein reductase] + O2 = N-(14,15-epoxy-5Z,8Z,11Z-eicosatrienoyl)-ethanolamine + oxidized [NADPH--hemoprotein reductase] + H2O + H(+). It carries out the reaction N-(5Z,8Z,11Z,14Z-eicosatetraenoyl)-ethanolamine + reduced [NADPH--hemoprotein reductase] + O2 = N-(20-hydroxy-5Z,8Z,11Z,14Z-eicosatetraenoyl)-ethanolamine + oxidized [NADPH--hemoprotein reductase] + H2O + H(+). The catalysed reaction is (5Z,8Z,11Z,14Z,17Z)-eicosapentaenoate + reduced [NADPH--hemoprotein reductase] + O2 = (17S,18R)-epoxy-(5Z,8Z,11Z,14Z)-eicosatetraenoate + oxidized [NADPH--hemoprotein reductase] + H2O + H(+). The enzyme catalyses (4Z,7Z,10Z,13Z,16Z,19Z)-docosahexaenoate + reduced [NADPH--hemoprotein reductase] + O2 = (19R,20S)-epoxy-(4Z,7Z,10Z,13Z,16Z)-docosapentaenoate + oxidized [NADPH--hemoprotein reductase] + H2O + H(+). It catalyses the reaction (4Z,7Z,10Z,13Z,16Z,19Z)-docosahexaenoate + reduced [NADPH--hemoprotein reductase] + O2 = (19S,20R)-epoxy-(4Z,7Z,10Z,13Z,16Z)-docosapentaenoate + oxidized [NADPH--hemoprotein reductase] + H2O + H(+). It carries out the reaction cholesterol + reduced [NADPH--hemoprotein reductase] + O2 = 25-hydroxycholesterol + oxidized [NADPH--hemoprotein reductase] + H2O + H(+). The catalysed reaction is all-trans-retinol + reduced [NADPH--hemoprotein reductase] + O2 = all-trans-retinal + oxidized [NADPH--hemoprotein reductase] + 2 H2O + H(+). It participates in cofactor metabolism; retinol metabolism. It functions in the pathway lipid metabolism; fatty acid metabolism. Its pathway is steroid metabolism; cholesterol metabolism. A cytochrome P450 monooxygenase involved in the metabolism of fatty acids, steroids and retinoids. Mechanistically, uses molecular oxygen inserting one oxygen atom into a substrate, and reducing the second into a water molecule, with two electrons provided by NADPH via cytochrome P450 reductase (NADPH--hemoprotein reductase). Catalyzes the epoxidation of double bonds of polyunsaturated fatty acids (PUFA). Metabolizes endocannabinoid arachidonoylethanolamide (anandamide) to 20-hydroxyeicosatetraenoic acid ethanolamide (20-HETE-EA) and 8,9-, 11,12-, and 14,15-epoxyeicosatrienoic acid ethanolamides (EpETrE-EAs), potentially modulating endocannabinoid system signaling. Catalyzes the hydroxylation of carbon-hydrogen bonds. Metabolizes cholesterol toward 25-hydroxycholesterol, a physiological regulator of cellular cholesterol homeostasis. Catalyzes the oxidative transformations of all-trans retinol to all-trans retinal, a precursor for the active form all-trans-retinoic acid. Also involved in the oxidative metabolism of drugs such as antiarrhythmics, adrenoceptor antagonists, and tricyclic antidepressants. This is Cytochrome P450 2D6 (CYP2D6) from Pan troglodytes (Chimpanzee).